The following is a 310-amino-acid chain: HTH-type transcriptional activator TtdR (310 aa).

Positions 6–63 (PLAKDLQVLVEIVHSGSFSAAAATLGQTPAFVTKRIQILENTLATTLLNRSARGVALT) constitute an HTH lysR-type domain. The H-T-H motif DNA-binding region spans 23 to 42 (FSAAAATLGQTPAFVTKRIQ).

It belongs to the LysR transcriptional regulatory family.

Positive regulator required for L-tartrate-dependent anaerobic growth on glycerol. Induces expression of the ttdA-ttdB-ygjE operon. This Escherichia coli O6:H1 (strain CFT073 / ATCC 700928 / UPEC) protein is HTH-type transcriptional activator TtdR (ttdR).